Reading from the N-terminus, the 351-residue chain is Fe(3+) ions import ATP-binding protein FbpC (351 aa).

One can recognise an ABC transporter domain in the interval 7–237 (VELKNVTKRF…PASEFMASFM (231 aa)). 39–46 (GPSGCGKT) is a binding site for ATP.

The protein belongs to the ABC transporter superfamily. Fe(3+) ion importer (TC 3.A.1.10) family. In terms of assembly, the complex is composed of two ATP-binding proteins (FbpC), two transmembrane proteins (FbpB) and a solute-binding protein (FbpA).

The protein localises to the cell inner membrane. The enzyme catalyses Fe(3+)(out) + ATP + H2O = Fe(3+)(in) + ADP + phosphate + H(+). Its function is as follows. Part of the ABC transporter complex FbpABC involved in Fe(3+) ions import. Responsible for energy coupling to the transport system. The sequence is that of Fe(3+) ions import ATP-binding protein FbpC from Photorhabdus laumondii subsp. laumondii (strain DSM 15139 / CIP 105565 / TT01) (Photorhabdus luminescens subsp. laumondii).